The chain runs to 297 residues: Oxidoreductase aprR (297 aa).

The protein belongs to the NmrA-type oxidoreductase family. Isoflavone reductase subfamily.

It functions in the pathway secondary metabolite biosynthesis. Its function is as follows. Oxidoreductase; part of the gene cluster that mediates the biosynthesis of the asperipin-2a, a bicyclic peptide that possesses two macrocyclic ether rings consisting of 14- and 17-membered paracyclophans. The pathway starts with the processing of the precursor aprA by kexin proteases to produce 11 identical copies of the hexapeptide Phe-Tyr-Tyr-Thr-Gly-Tyr. Macrocyclization of asperipin-2a may accompany an alpha-hydroxylation-dehydration sequence to give an imine, which is readily hydrolyzed to yield putative ketone intermediate. The reductase aprR may be required for the final reduction to yield asperipin-2a. The protein is Oxidoreductase aprR of Aspergillus flavus (strain ATCC 200026 / FGSC A1120 / IAM 13836 / NRRL 3357 / JCM 12722 / SRRC 167).